We begin with the raw amino-acid sequence, 326 residues long: ELMO domain-containing protein 1 (326 aa).

The ELMO domain maps to 133 to 306; sequence QHEEMLLKLW…KFRKRIIKQL (174 aa).

Acts as a GTPase-activating protein (GAP) toward guanine nucleotide exchange factors like ARL2, ARL3, ARF1 and ARF6, but not for GTPases outside the Arf family. In Bos taurus (Bovine), this protein is ELMO domain-containing protein 1 (ELMOD1).